We begin with the raw amino-acid sequence, 201 residues long: ATP-dependent Clp protease proteolytic subunit (201 aa).

Catalysis depends on S98, which acts as the Nucleophile. The active site involves H123.

It belongs to the peptidase S14 family. In terms of assembly, fourteen ClpP subunits assemble into 2 heptameric rings which stack back to back to give a disk-like structure with a central cavity, resembling the structure of eukaryotic proteasomes.

It localises to the cytoplasm. It carries out the reaction Hydrolysis of proteins to small peptides in the presence of ATP and magnesium. alpha-casein is the usual test substrate. In the absence of ATP, only oligopeptides shorter than five residues are hydrolyzed (such as succinyl-Leu-Tyr-|-NHMec, and Leu-Tyr-Leu-|-Tyr-Trp, in which cleavage of the -Tyr-|-Leu- and -Tyr-|-Trp bonds also occurs).. Its function is as follows. Cleaves peptides in various proteins in a process that requires ATP hydrolysis. Has a chymotrypsin-like activity. Plays a major role in the degradation of misfolded proteins. The protein is ATP-dependent Clp protease proteolytic subunit of Rickettsia canadensis (strain McKiel).